The following is a 51-amino-acid chain: Putative antitoxin VapB6 (51 aa).

In terms of biological role, antitoxin component of a possible type II toxin-antitoxin (TA) system. The cognate toxin is VapC6. The polypeptide is Putative antitoxin VapB6 (vapB6) (Mycobacterium tuberculosis (strain CDC 1551 / Oshkosh)).